The primary structure comprises 202 residues: FMN-dependent NADH:quinone oxidoreductase 2 (202 aa).

FMN-binding positions include S9, 15 to 17 (SAS), 95 to 98 (MYNF), and 139 to 142 (TAGG).

This sequence belongs to the azoreductase type 1 family. Homodimer. The cofactor is FMN.

It carries out the reaction 2 a quinone + NADH + H(+) = 2 a 1,4-benzosemiquinone + NAD(+). The catalysed reaction is N,N-dimethyl-1,4-phenylenediamine + anthranilate + 2 NAD(+) = 2-(4-dimethylaminophenyl)diazenylbenzoate + 2 NADH + 2 H(+). Its function is as follows. Quinone reductase that provides resistance to thiol-specific stress caused by electrophilic quinones. Reduces both benzoquinones and naphthoquinones efficiently. Also exhibits azoreductase activity. Catalyzes the reductive cleavage of the azo bond in aromatic azo compounds to the corresponding amines. Preferred substrates are the large bis-azo dye Ponceau BS, amaranth and tropaeolin O. The protein is FMN-dependent NADH:quinone oxidoreductase 2 of Pseudomonas aeruginosa (strain ATCC 15692 / DSM 22644 / CIP 104116 / JCM 14847 / LMG 12228 / 1C / PRS 101 / PAO1).